Here is a 338-residue protein sequence, read N- to C-terminus: MPIFTAQELAERFNLQLFGDGNIRIHGVATLTQASPEQLSFLANPRYLTQLPNSRAGVIVLHADDVKAASGAVLIAKDPYVTFAKIATLFDIKPAREAGIHPLATVDPSAHVSPTAHVGAFVSIGARSSIGASCIIGTGSIIGDDCTIDDGSELIARVTLISRVRLGKRVRIHPGAVLGGEGFGLAMESGHWIKIPQLGGVVIGDDCEIGANSCIDRGALDDTVLEEDVHIDNLVQIAHNCRIGAHTAIAGCTGIAGSAKIGRYCLLGGHVGVVGHLQICDNVVITGKSVVRNSIHTPGEYSSGTPLTDNRTWRKNAVRFKQLDMLVRRMMAVSKEKA.

Residue His239 is the Proton acceptor of the active site.

This sequence belongs to the transferase hexapeptide repeat family. LpxD subfamily. As to quaternary structure, homotrimer.

It carries out the reaction a UDP-3-O-[(3R)-3-hydroxyacyl]-alpha-D-glucosamine + a (3R)-hydroxyacyl-[ACP] = a UDP-2-N,3-O-bis[(3R)-3-hydroxyacyl]-alpha-D-glucosamine + holo-[ACP] + H(+). Its pathway is bacterial outer membrane biogenesis; LPS lipid A biosynthesis. In terms of biological role, catalyzes the N-acylation of UDP-3-O-acylglucosamine using 3-hydroxyacyl-ACP as the acyl donor. Is involved in the biosynthesis of lipid A, a phosphorylated glycolipid that anchors the lipopolysaccharide to the outer membrane of the cell. This Xylella fastidiosa (strain M23) protein is UDP-3-O-acylglucosamine N-acyltransferase.